A 268-amino-acid chain; its full sequence is Basic endochitinase CHB4 (268 aa).

An N-terminal signal peptide occupies residues Met1–Ser24. Residues Gln25–Ser59 enclose the Chitin-binding type-1 domain. Disulfide bonds link Cys27-Cys35, Cys29-Cys41, Cys34-Cys48, Cys52-Cys57, Cys92-Cys137, Cys150-Cys159, and Cys236-Cys268. Residues Ser71 to Cys268 are catalytic. The active-site Proton donor is the Glu132. N-linked (GlcNAc...) asparagine glycosylation is present at Asn265.

The protein belongs to the glycosyl hydrolase 19 family. Chitinase class I subfamily.

It is found in the secreted. It localises to the extracellular space. It catalyses the reaction Random endo-hydrolysis of N-acetyl-beta-D-glucosaminide (1-&gt;4)-beta-linkages in chitin and chitodextrins.. In terms of biological role, defense against chitin-containing fungal pathogens. In Brassica napus (Rape), this protein is Basic endochitinase CHB4.